Reading from the N-terminus, the 261-residue chain is MAPTPWISFTTDYGLADGFVAACHGVLARLTPTTRVIDVTHLVPPGDVRRGAAVLAQAVPYLPAAVHLAVVDPGVGTARRAIALAAGDGLLVGPDNGLLLDAAAALGGVRAAVELTNRDWLGADVSATFHGRDIFAPVAARLALGAPLADAGPAVEPSTLVRLPVPLVRPEADGFTAEVLTVDHFGNVQLAASGSLLEPLPRSLRVERQPAVRVHTFGDVAPGELLVHVDSTGQVAVAVNGGRAADLLGVTPGDRLRVTAG.

Adenosine contacts are provided by D12, D72, and N187. Residues N187, S231, and V239 each coordinate (R)-S-adenosyl-L-methionine. V239 contacts adenosine.

It belongs to the SAM hydrolase / SAM-dependent halogenase family.

The catalysed reaction is (R)-S-adenosyl-L-methionine + H2O = adenosine + L-methionine + H(+). Specifically hydrolyzes (R)-S-adenosyl-L-methionine ((R)-SAM), the inactive form of the ubiquitous cofactor SAM, into adenosine and L-methionine. Is stereoselective as it cannot use the active form of SAM, (S)-S-adenosyl-L-methionine, as substrate. Likely plays a role in preventing accumulation of (R)-S-adenosyl-L-methionine in cells; maintenance of (S)-S-denosyl-L-methionine homochirality is important for cellular health given that the (R)-form is largely inactive as a methyl donor and can function as an inhibitor of methyltransferases. This Salinispora tropica (strain ATCC BAA-916 / DSM 44818 / JCM 13857 / NBRC 105044 / CNB-440) protein is (R)-S-adenosyl-L-methionine hydrolase.